The following is a 619-amino-acid chain: Probable ATP-dependent RNA helicase DDX59 (619 aa).

Residues 1 to 101 (MFVPRSLKIK…KSFSKTQRWP (101 aa)) are disordered. The span at 12–27 (SSNDDLKSGEAKKSKP) shows a compositional bias: basic and acidic residues. Residue lysine 26 forms a Glycyl lysine isopeptide (Lys-Gly) (interchain with G-Cter in SUMO2) linkage. The segment covering 59–76 (ASSTNSPSCQLAEVSSTG) has biased composition (polar residues). Serine 64 is subject to Phosphoserine. Positions 79–91 (EGVKDSHPSEEPV) are enriched in basic and acidic residues. An HIT-type zinc finger spans residues 104–133 (GEPVCVVCGRYGEYICDKTDEDVCSLECKA). Position 160 is a phosphoserine (serine 160). Positions 203 to 231 (IDFEHCGFPETLNQNLKKSGYEVPTPIQM) match the Q motif motif. The 172-residue stretch at 234-405 (IPVGLLGRDI…DQLLHNPVRI (172 aa)) folds into the Helicase ATP-binding domain. 247 to 254 (ADTGSGKT) provides a ligand contact to ATP. A DEAD box motif is present at residues 353-356 (DEAD). The Helicase C-terminal domain maps to 416-579 (SVRQIILWVE…ILPPQLLNSP (164 aa)). Basic and acidic residues predominate over residues 583 to 594 (EQKRKEQQKDRQ). The tract at residues 583 to 603 (EQKRKEQQKDRQTQNSLVTGA) is disordered.

This sequence belongs to the DEAD box helicase family. DDX59 subfamily. Interacts (via HIT-type zinc finger) with the RUVBL1/RUVBL2 complex in the presence of ADP.

Its subcellular location is the cytoplasm. It localises to the nucleus. It carries out the reaction ATP + H2O = ADP + phosphate + H(+). This Mus musculus (Mouse) protein is Probable ATP-dependent RNA helicase DDX59 (Ddx59).